A 107-amino-acid polypeptide reads, in one-letter code: Apolipoprotein E (107 aa).

Repeat copies occupy residues 11–32 (ALMDETMKELKAYKSELEEQLS), 33–54 (PVAEETRARLSKELQAAQARLG), 55–76 (ADMEDVRSRLAQYRSEVQAMLG), 77–98 (QSTDELRARLASHLRKLRKRLL), and 99–107 (RDVDDLQKR). Residues 11 to 107 (ALMDETMKEL…LRDVDDLQKR (97 aa)) form a 5 X 22 AA approximate tandem repeats region. Met-74 carries the methionine sulfoxide modification. Ser-78 is modified (phosphoserine). The tract at residues 89 to 99 (HLRKLRKRLLR) is LDL and other lipoprotein receptors binding. Residue 93–96 (LRKR) participates in heparin binding.

Belongs to the apolipoprotein A1/A4/E family. Homotetramer. May interact with ABCA1; functionally associated with ABCA1 in the biogenesis of HDLs. May interact with APP/A4 amyloid-beta peptide; the interaction is extremely stable in vitro but its physiological significance is unclear. May interact with MAPT. May interact with MAP2. In the cerebrospinal fluid, interacts with secreted SORL1. Interacts with PMEL; this allows the loading of PMEL luminal fragment on ILVs to induce fibril nucleation. In terms of processing, APOE exists as multiple glycosylated and sialylated glycoforms within cells and in plasma. The extent of glycosylation and sialylation are tissue and context specific. Glycated in plasma VLDL. Post-translationally, phosphorylated by FAM20C in the extracellular medium.

The protein resides in the secreted. It is found in the extracellular space. Its subcellular location is the extracellular matrix. The protein localises to the extracellular vesicle. It localises to the endosome. The protein resides in the multivesicular body. APOE is an apolipoprotein, a protein associating with lipid particles, that mainly functions in lipoprotein-mediated lipid transport between organs via the plasma and interstitial fluids. APOE is a core component of plasma lipoproteins and is involved in their production, conversion and clearance. Apolipoproteins are amphipathic molecules that interact both with lipids of the lipoprotein particle core and the aqueous environment of the plasma. As such, APOE associates with chylomicrons, chylomicron remnants, very low density lipoproteins (VLDL) and intermediate density lipoproteins (IDL) but shows a preferential binding to high-density lipoproteins (HDL). It also binds a wide range of cellular receptors including the LDL receptor/LDLR, the LDL receptor-related proteins LRP1, LRP2 and LRP8 and the very low-density lipoprotein receptor/VLDLR that mediate the cellular uptake of the APOE-containing lipoprotein particles. Finally, APOE also has a heparin-binding activity and binds heparan-sulfate proteoglycans on the surface of cells, a property that supports the capture and the receptor-mediated uptake of APOE-containing lipoproteins by cells. A main function of APOE is to mediate lipoprotein clearance through the uptake of chylomicrons, VLDLs, and HDLs by hepatocytes. APOE is also involved in the biosynthesis by the liver of VLDLs as well as their uptake by peripheral tissues ensuring the delivery of triglycerides and energy storage in muscle, heart and adipose tissues. By participating in the lipoprotein-mediated distribution of lipids among tissues, APOE plays a critical role in plasma and tissues lipid homeostasis. APOE is also involved in two steps of reverse cholesterol transport, the HDLs-mediated transport of cholesterol from peripheral tissues to the liver, and thereby plays an important role in cholesterol homeostasis. First, it is functionally associated with ABCA1 in the biogenesis of HDLs in tissues. Second, it is enriched in circulating HDLs and mediates their uptake by hepatocytes. APOE also plays an important role in lipid transport in the central nervous system, regulating neuron survival and sprouting. The chain is Apolipoprotein E (APOE) from Saimiri sciureus (Common squirrel monkey).